Reading from the N-terminus, the 192-residue chain is dTTP/UTP pyrophosphatase (192 aa).

D70 serves as the catalytic Proton acceptor.

The protein belongs to the Maf family. YhdE subfamily. A divalent metal cation is required as a cofactor.

It is found in the cytoplasm. The enzyme catalyses dTTP + H2O = dTMP + diphosphate + H(+). It catalyses the reaction UTP + H2O = UMP + diphosphate + H(+). In terms of biological role, nucleoside triphosphate pyrophosphatase that hydrolyzes dTTP and UTP. May have a dual role in cell division arrest and in preventing the incorporation of modified nucleotides into cellular nucleic acids. This Clostridium perfringens (strain ATCC 13124 / DSM 756 / JCM 1290 / NCIMB 6125 / NCTC 8237 / Type A) protein is dTTP/UTP pyrophosphatase.